Here is a 405-residue protein sequence, read N- to C-terminus: Dynactin subunit 2 (405 aa).

The segment at 1-25 (MADPKYADLPGIARNEPDVYETSDL) is disordered. A2 bears the N-acetylalanine mark. Y6 is subject to Phosphotyrosine. S85 carries the post-translational modification Phosphoserine. At Y88 the chain carries Phosphotyrosine. The stretch at 105-132 (YQRLLHEVQELTTEVEKIKMTVKESATE) forms a coiled coil. A Phosphothreonine modification is found at T136. The segment at 187 to 207 (KNTKGAGSGGKTTSGSPPDSS) is disordered. S324 bears the Phosphoserine mark.

It belongs to the dynactin subunit 2 family. As to quaternary structure, subunit of dynactin, a multiprotein complex part of a tripartite complex with dynein and a adapter, such as BICDL1, BICD2 or HOOK3. The dynactin complex is built around ACTR1A/ACTB filament and consists of an actin-related filament composed of a shoulder domain, a pointed end and a barbed end. Its length is defined by its flexible shoulder domain. The soulder is composed of 2 DCTN1 subunits, 4 DCTN2 and 2 DCTN3. The 4 DCNT2 (via N-terminus) bind the ACTR1A filament and act as molecular rulers to determine the length. The pointed end is important for binding dynein-dynactin cargo adapters and consists of 4 subunits: ACTR10, DCNT4, DCTN5 and DCTN6. The barbed end is composed of a CAPZA1:CAPZB heterodimers, which binds ACTR1A/ACTB filament and dynactin and stabilizes dynactin. Interacts with BICD2 and CEP135. Interacts with DYNAP. Interacts with ECPAS. Interacts with MAPRE1.

The protein resides in the cytoplasm. Its subcellular location is the cytoskeleton. It is found in the microtubule organizing center. The protein localises to the centrosome. It localises to the membrane. In terms of biological role, part of the dynactin complex that activates the molecular motor dynein for ultra-processive transport along microtubules. In the dynactin soulder domain, binds the ACTR1A filament and acts as a molecular ruler to determine the length. Modulates cytoplasmic dynein binding to an organelle, and plays a role in prometaphase chromosome alignment and spindle organization during mitosis. Involved in anchoring microtubules to centrosomes. May play a role in synapse formation during brain development. The protein is Dynactin subunit 2 (DCTN2) of Sus scrofa (Pig).